The sequence spans 159 residues: Large ribosomal subunit protein mL50 (159 aa).

Belongs to the mitochondrion-specific ribosomal protein mL50 family. In terms of assembly, component of the mitochondrial ribosome large subunit (39S) which comprises a 16S rRNA and about 50 distinct proteins.

The protein localises to the mitochondrion. The protein is Large ribosomal subunit protein mL50 (Mrpl50) of Mus musculus (Mouse).